Consider the following 89-residue polypeptide: Large ribosomal subunit protein bL31B (89 aa).

Belongs to the bacterial ribosomal protein bL31 family. Type B subfamily. Part of the 50S ribosomal subunit.

This chain is Large ribosomal subunit protein bL31B, found in Pseudomonas fluorescens (strain ATCC BAA-477 / NRRL B-23932 / Pf-5).